We begin with the raw amino-acid sequence, 339 residues long: Adenylosuccinate synthetase (339 aa).

GTP is bound by residues 12 to 18 (GDEGKGS) and 42 to 44 (GHS). The active-site Proton acceptor is Asp-13. Residues Asp-13 and Gly-42 each contribute to the Mg(2+) site. Residues 13–16 (DEGK), 40–43 (NAGH), Thr-127, Arg-141, Gln-179, Thr-194, and Arg-256 contribute to the IMP site. The active-site Proton donor is the His-43. Residue 252–258 (TVTGRRR) coordinates substrate. GTP is bound by residues Arg-258, 284 to 286 (MLD), and 324 to 326 (KTG).

This sequence belongs to the adenylosuccinate synthetase family. As to quaternary structure, homodimer. Mg(2+) serves as cofactor.

The protein localises to the cytoplasm. The catalysed reaction is IMP + L-aspartate + GTP = N(6)-(1,2-dicarboxyethyl)-AMP + GDP + phosphate + 2 H(+). Its pathway is purine metabolism; AMP biosynthesis via de novo pathway; AMP from IMP: step 1/2. Its function is as follows. Plays an important role in the de novo pathway of purine nucleotide biosynthesis. Catalyzes the first committed step in the biosynthesis of AMP from IMP. This is Adenylosuccinate synthetase from Pyrococcus horikoshii (strain ATCC 700860 / DSM 12428 / JCM 9974 / NBRC 100139 / OT-3).